The following is a 220-amino-acid chain: ATP-dependent dethiobiotin synthetase BioD (220 aa).

13–18 (EVGKTV) is a binding site for ATP. A Mg(2+)-binding site is contributed by threonine 17. Lysine 38 is a catalytic residue. Serine 42 lines the substrate pocket. Residues aspartate 55, 116 to 119 (EGAG), 176 to 177 (NR), and asparagine 212 each bind ATP. Mg(2+) contacts are provided by aspartate 55 and glutamate 116.

The protein belongs to the dethiobiotin synthetase family. As to quaternary structure, homodimer. The cofactor is Mg(2+).

Its subcellular location is the cytoplasm. The catalysed reaction is (7R,8S)-7,8-diammoniononanoate + CO2 + ATP = (4R,5S)-dethiobiotin + ADP + phosphate + 3 H(+). Its pathway is cofactor biosynthesis; biotin biosynthesis; biotin from 7,8-diaminononanoate: step 1/2. Catalyzes a mechanistically unusual reaction, the ATP-dependent insertion of CO2 between the N7 and N8 nitrogen atoms of 7,8-diaminopelargonic acid (DAPA, also called 7,8-diammoniononanoate) to form a ureido ring. The chain is ATP-dependent dethiobiotin synthetase BioD from Photobacterium profundum (strain SS9).